The primary structure comprises 249 residues: 5'-nucleotidase SurE (249 aa).

A divalent metal cation is bound by residues Asp-8, Asp-9, Ser-39, and Asn-91.

Belongs to the SurE nucleotidase family. A divalent metal cation serves as cofactor.

Its subcellular location is the cytoplasm. The catalysed reaction is a ribonucleoside 5'-phosphate + H2O = a ribonucleoside + phosphate. Functionally, nucleotidase that shows phosphatase activity on nucleoside 5'-monophosphates. The protein is 5'-nucleotidase SurE of Pseudomonas syringae pv. syringae (strain B728a).